The sequence spans 364 residues: Probable UDP-arabinopyranose mutase 1 (364 aa).

Residues 110 to 112 (DDD) carry the DXD motif motif. N-linked (Glc...) arginine glycosylation is present at Arg-158.

This sequence belongs to the RGP family. Homopentamer or homohexamer. Requires Mn(2+) as cofactor. The cofactor is Mg(2+). Post-translationally, reversibly glycosylated by UDP-glucose, UDP-xylose and UDP-galactose.

The protein localises to the secreted. Its subcellular location is the cell wall. It localises to the cell junction. It is found in the plasmodesma. The protein resides in the golgi apparatus. The enzyme catalyses UDP-beta-L-arabinofuranose = UDP-beta-L-arabinopyranose. Its function is as follows. Probable UDP-L-arabinose mutase involved in the biosynthesis of cell wall non-cellulosic polysaccharides. Was initially shown to possess an autoglycosylating activity which is dependent on the presence of UDP-glucose and manganese. This is Probable UDP-arabinopyranose mutase 1 from Zea mays (Maize).